Consider the following 173-residue polypeptide: uncharacterized protein (173 aa).

The N-terminal stretch at M1–A25 is a signal peptide.

This is an uncharacterized protein from Mycobacterium bovis (strain ATCC BAA-935 / AF2122/97).